A 333-amino-acid polypeptide reads, in one-letter code: Probable HTH-type transcriptional repressor ExuR (333 aa).

Residues 2 to 56 enclose the HTH lacI-type domain; it reads VTIKDIAKLANVSHTTVSRALNNSPYIKEHTKKKILELAEQLNYTPNVNAKSLAM. Residues 4–23 constitute a DNA-binding region (H-T-H motif); that stretch reads IKDIAKLANVSHTTVSRALN.

In terms of biological role, transcriptional repressor for the exu locus which is required for galacturonate utilization. The sequence is that of Probable HTH-type transcriptional repressor ExuR (exuR) from Bacillus subtilis (strain 168).